Reading from the N-terminus, the 413-residue chain is Multifunctional CCA protein (413 aa).

Residues Gly8 and Arg11 each coordinate ATP. CTP is bound by residues Gly8 and Arg11. Mg(2+)-binding residues include Asp21 and Asp23. Residues Arg91, Arg137, and Arg140 each contribute to the ATP site. Positions 91, 137, and 140 each coordinate CTP. In terms of domain architecture, HD spans 228–329 (TGVHTLMTLS…VKLFDAIDAW (102 aa)).

The protein belongs to the tRNA nucleotidyltransferase/poly(A) polymerase family. Bacterial CCA-adding enzyme type 1 subfamily. In terms of assembly, monomer. Can also form homodimers and oligomers. Requires Mg(2+) as cofactor. The cofactor is Ni(2+).

It carries out the reaction a tRNA precursor + 2 CTP + ATP = a tRNA with a 3' CCA end + 3 diphosphate. The catalysed reaction is a tRNA with a 3' CCA end + 2 CTP + ATP = a tRNA with a 3' CCACCA end + 3 diphosphate. Catalyzes the addition and repair of the essential 3'-terminal CCA sequence in tRNAs without using a nucleic acid template. Adds these three nucleotides in the order of C, C, and A to the tRNA nucleotide-73, using CTP and ATP as substrates and producing inorganic pyrophosphate. tRNA 3'-terminal CCA addition is required both for tRNA processing and repair. Also involved in tRNA surveillance by mediating tandem CCA addition to generate a CCACCA at the 3' terminus of unstable tRNAs. While stable tRNAs receive only 3'-terminal CCA, unstable tRNAs are marked with CCACCA and rapidly degraded. This Salmonella paratyphi A (strain ATCC 9150 / SARB42) protein is Multifunctional CCA protein.